Reading from the N-terminus, the 162-residue chain is RNA pyrophosphohydrolase (162 aa).

The Nudix hydrolase domain occupies 11 to 155; sequence PYRPCVGIVL…KRAVYEEVVA (145 aa). A Nudix box motif is present at residues 45 to 66; sequence GGIDEGEKPREAALRELWEETG.

This sequence belongs to the Nudix hydrolase family. RppH subfamily. The cofactor is a divalent metal cation.

Its function is as follows. Accelerates the degradation of transcripts by removing pyrophosphate from the 5'-end of triphosphorylated RNA, leading to a more labile monophosphorylated state that can stimulate subsequent ribonuclease cleavage. The sequence is that of RNA pyrophosphohydrolase from Cereibacter sphaeroides (strain ATCC 17023 / DSM 158 / JCM 6121 / CCUG 31486 / LMG 2827 / NBRC 12203 / NCIMB 8253 / ATH 2.4.1.) (Rhodobacter sphaeroides).